The primary structure comprises 223 residues: Ribose-5-phosphate isomerase A (223 aa).

Substrate-binding positions include T32–T35, D83–D86, and K96–G99. E105 functions as the Proton acceptor in the catalytic mechanism. Residue K123 participates in substrate binding.

This sequence belongs to the ribose 5-phosphate isomerase family. In terms of assembly, homodimer.

The enzyme catalyses aldehydo-D-ribose 5-phosphate = D-ribulose 5-phosphate. It participates in carbohydrate degradation; pentose phosphate pathway; D-ribose 5-phosphate from D-ribulose 5-phosphate (non-oxidative stage): step 1/1. Its function is as follows. Catalyzes the reversible conversion of ribose-5-phosphate to ribulose 5-phosphate. In Acinetobacter baumannii (strain ATCC 17978 / DSM 105126 / CIP 53.77 / LMG 1025 / NCDC KC755 / 5377), this protein is Ribose-5-phosphate isomerase A.